The chain runs to 100 residues: UPF0125 protein HD_1828 (100 aa).

The protein belongs to the UPF0125 (RnfH) family.

This Haemophilus ducreyi (strain 35000HP / ATCC 700724) protein is UPF0125 protein HD_1828.